The following is a 99-amino-acid chain: C-C motif chemokine 17 (99 aa).

The signal sequence occupies residues 1–23; sequence MIPLKMLLLVTLLLGASLQVTHA. Disulfide bonds link C33–C57 and C34–C73.

Belongs to the intercrine beta (chemokine CC) family. Expressed in thymus, spleen, lymph node, lung and heart.

It is found in the secreted. Functionally, chemokine, which displays chemotactic activity for T lymphocytes, preferentially Th2 cells, but not monocytes or granulocytes. Therefore plays an important role in a wide range of inflammatory and immunological processes. Acts by binding to CCR4 at T-cell surface. Mediates GM-CSF/CSF2-driven pain and inflammation. In the brain, required to maintain the typical, highly branched morphology of hippocampal microglia under homeostatic conditions. May be important for the appropriate adaptation of microglial morphology and synaptic plasticity to acute lipopolysaccharide (LPS)-induced neuroinflammation. Plays a role in wound healing, mainly by inducing fibroblast migration into the wound. The sequence is that of C-C motif chemokine 17 (CCL17) from Canis lupus familiaris (Dog).